The primary structure comprises 509 residues: MRKPTALIILDGFGLREETYGNAVAQAKKPNFDGYWNKFPHTTLTACGEAVGLPEGQMGNSEVGHLNIGAGRIVYQSLTRVNVAIREGEFDKNETFQSAIKSVKEKGTALHLFGLLSDGGVHSHMNHMFALLRLAAKEGVEKVYIHAFLDGRDVGPKTAQSYIDATNEVMKETGVGQFATISGRYYSMDRDKRWDRVEKCYRAMVNGEGPTYKSAEECVEDSYANGIYDEFVLPSVIVNEDNTPVATINDDDAVIFYNFRPDRAIQIARVFTNEDFREFDRGEKVPHIPEFVCMTHFSETVDGYVAFKPMNLDNTLGEVVAQAGLKQLRIAETEKYPHVTFFFSGGREAEFPGEERILINSPKVATYDLKPEMSIYEVTDALVNEIENDKHDVIILNFANCDMVGHSGMMEPTIKAVEATDECLGKVVEAILAKDGVALITADHGNADEELTSEGEPMTAHTTNPVPFIVTKNDVELREGGILGDIAPTMLTLLGVEQPKEMTGKTIIK.

D11 provides a ligand contact to Mn(2+). Phosphotyrosine is present on Y35. Mn(2+) is bound at residue S61. The Phosphoserine intermediate role is filled by S61. Substrate-binding positions include H122, 152–153 (RD), R184, R190, 260–263 (RPDR), and K335. 5 residues coordinate Mn(2+): D402, H406, D443, H444, and H461.

This sequence belongs to the BPG-independent phosphoglycerate mutase family. Monomer. It depends on Mn(2+) as a cofactor.

It carries out the reaction (2R)-2-phosphoglycerate = (2R)-3-phosphoglycerate. Its pathway is carbohydrate degradation; glycolysis; pyruvate from D-glyceraldehyde 3-phosphate: step 3/5. Functionally, essential for rapid growth and for sporulation. Catalyzes the interconversion of 2-phosphoglycerate and 3-phosphoglycerate. This chain is 2,3-bisphosphoglycerate-independent phosphoglycerate mutase, found in Bacillus thuringiensis (strain Al Hakam).